A 215-amino-acid chain; its full sequence is Somatotropin (215 aa).

The first 25 residues, 1 to 25 (MAPGARISLLLLITFTLLGPQRSGA), serve as a signal peptide directing secretion. His44 lines the Zn(2+) pocket. A disulfide bond links Cys77 and Cys188. Ser130 bears the Phosphoserine mark. Position 197 (Glu197) interacts with Zn(2+). The cysteines at positions 205 and 213 are disulfide-linked.

Belongs to the somatotropin/prolactin family.

Its subcellular location is the secreted. Its function is as follows. Plays an important role in growth control. Its major role in stimulating body growth is to stimulate the liver and other tissues to secrete IGF1. It stimulates both the differentiation and proliferation of myoblasts. It also stimulates amino acid uptake and protein synthesis in muscle and other tissues. The protein is Somatotropin (GH1) of Trichosurus vulpecula (Brush-tailed possum).